The chain runs to 340 residues: Extracellular matrix protein-binding protein emp (340 aa).

A signal peptide spans 1–26 (MKKKLLVLTMSTLFATQIMNSNHAKA).

Its subcellular location is the cell surface. Adhesin that binds to the host cell extracellular matrix proteins fibronectin, fibrinogen, collagen, and vitronectin. The polypeptide is Extracellular matrix protein-binding protein emp (emp) (Staphylococcus aureus (strain USA300)).